The sequence spans 79 residues: Translational regulator CsrA (79 aa).

The protein belongs to the CsrA/RsmA family. Homodimer; the beta-strands of each monomer intercalate to form a hydrophobic core, while the alpha-helices form wings that extend away from the core.

The protein resides in the cytoplasm. Functionally, a translational regulator that binds mRNA to regulate translation initiation and/or mRNA stability. Usually binds in the 5'-UTR at or near the Shine-Dalgarno sequence preventing ribosome-binding, thus repressing translation. Its main target seems to be the major flagellin gene, while its function is anatagonized by FliW. The polypeptide is Translational regulator CsrA (Solidesulfovibrio magneticus (strain ATCC 700980 / DSM 13731 / RS-1) (Desulfovibrio magneticus)).